The chain runs to 130 residues: Small ribosomal subunit protein uS9 (130 aa).

It belongs to the universal ribosomal protein uS9 family.

The chain is Small ribosomal subunit protein uS9 from Bordetella parapertussis (strain 12822 / ATCC BAA-587 / NCTC 13253).